A 1390-amino-acid polypeptide reads, in one-letter code: DNA-directed RNA polymerase subunit beta'' (1390 aa).

Zn(2+) contacts are provided by cysteine 224, cysteine 295, cysteine 302, and cysteine 305.

This sequence belongs to the RNA polymerase beta' chain family. RpoC2 subfamily. In plastids the minimal PEP RNA polymerase catalytic core is composed of four subunits: alpha, beta, beta', and beta''. When a (nuclear-encoded) sigma factor is associated with the core the holoenzyme is formed, which can initiate transcription. Zn(2+) serves as cofactor.

It is found in the plastid. Its subcellular location is the chloroplast. It catalyses the reaction RNA(n) + a ribonucleoside 5'-triphosphate = RNA(n+1) + diphosphate. Its function is as follows. DNA-dependent RNA polymerase catalyzes the transcription of DNA into RNA using the four ribonucleoside triphosphates as substrates. In Daucus carota (Wild carrot), this protein is DNA-directed RNA polymerase subunit beta''.